A 222-amino-acid chain; its full sequence is Sugar fermentation stimulation protein homolog (222 aa).

The protein belongs to the SfsA family.

This Thermotoga sp. (strain RQ2) protein is Sugar fermentation stimulation protein homolog.